The following is a 448-amino-acid chain: Exodeoxyribonuclease 7 large subunit (448 aa).

The protein belongs to the XseA family. Heterooligomer composed of large and small subunits.

It localises to the cytoplasm. It carries out the reaction Exonucleolytic cleavage in either 5'- to 3'- or 3'- to 5'-direction to yield nucleoside 5'-phosphates.. In terms of biological role, bidirectionally degrades single-stranded DNA into large acid-insoluble oligonucleotides, which are then degraded further into small acid-soluble oligonucleotides. The protein is Exodeoxyribonuclease 7 large subunit of Photobacterium profundum (strain SS9).